Consider the following 30-residue polypeptide: Conotoxin CcTx (30 aa).

Position 2 is a 4-hydroxyproline (Pro2). Ser7 is a glycosylation site (O-linked (HexNAc...) serine). 3 disulfides stabilise this stretch: Cys12–Cys21, Cys13–Cys26, and Cys24–Cys30. Pro17 and Pro22 each carry 4-hydroxyproline.

O-glycosylated at Ser-7 by a core type 9 glycan, containing both D- and L-galactose units (alpha-L-Galp-(1-&gt;4)-alpha-D- GlcpNAc-(1-&gt;6)-[alpha-L-Galp-(1-&gt;2)-bets-D-Galp-(1-&gt;3)-]alpha-D-GalpNAc-(1-&gt;O)). In terms of tissue distribution, expressed by the venom duct.

It localises to the secreted. May specifically activate neuronal voltage-gated sodium channels (Nav) at the resting membrane potential. Causes a marked contraction and extension of the caudal and dorsal fins in fish and noticeable spontaneous contractions of isolated frog neuromuscular preparations. The chain is Conotoxin CcTx from Conus consors (Singed cone).